We begin with the raw amino-acid sequence, 296 residues long: Light-independent protochlorophyllide reductase iron-sulfur ATP-binding protein (296 aa).

Residues 1 to 20 form a disordered region; the sequence is MTTTLSRPTDGEGSVQVQQD. Residues 39–44 and Lys68 each bind ATP; that span reads GIGKST. Residue Ser43 coordinates Mg(2+). Residues Cys124 and Cys158 each contribute to the [4Fe-4S] cluster site. An ATP-binding site is contributed by 209-210; the sequence is NR.

Belongs to the NifH/BchL/ChlL family. As to quaternary structure, homodimer. Protochlorophyllide reductase is composed of three subunits; ChlL, ChlN and ChlB. Requires [4Fe-4S] cluster as cofactor.

It catalyses the reaction chlorophyllide a + oxidized 2[4Fe-4S]-[ferredoxin] + 2 ADP + 2 phosphate = protochlorophyllide a + reduced 2[4Fe-4S]-[ferredoxin] + 2 ATP + 2 H2O. Its pathway is porphyrin-containing compound metabolism; chlorophyll biosynthesis (light-independent). Functionally, component of the dark-operative protochlorophyllide reductase (DPOR) that uses Mg-ATP and reduced ferredoxin to reduce ring D of protochlorophyllide (Pchlide) to form chlorophyllide a (Chlide). This reaction is light-independent. The L component serves as a unique electron donor to the NB-component of the complex, and binds Mg-ATP. The protein is Light-independent protochlorophyllide reductase iron-sulfur ATP-binding protein of Synechococcus sp. (strain CC9902).